Consider the following 659-residue polypeptide: Alpha-amylase (659 aa).

An N-terminal signal peptide occupies residues methionine 1 to glycine 27. Positions proline 28–glutamate 41 are excised as a propeptide. Ca(2+)-binding residues include asparagine 142, threonine 178, aspartate 187, glycine 210, and aspartate 212. Residue aspartate 217 is the Nucleophile of the active site. Ca(2+) is bound at residue histidine 221. The active-site Proton donor is the glutamate 249.

This sequence belongs to the glycosyl hydrolase 13 family. In terms of assembly, monomer. Requires Ca(2+) as cofactor.

The protein resides in the secreted. The catalysed reaction is Endohydrolysis of (1-&gt;4)-alpha-D-glucosidic linkages in polysaccharides containing three or more (1-&gt;4)-alpha-linked D-glucose units.. This Bacillus subtilis (strain 168) protein is Alpha-amylase (amyE).